A 335-amino-acid polypeptide reads, in one-letter code: Phosphate acyltransferase (335 aa).

The protein belongs to the PlsX family. In terms of assembly, homodimer. Probably interacts with PlsY.

Its subcellular location is the cytoplasm. The catalysed reaction is a fatty acyl-[ACP] + phosphate = an acyl phosphate + holo-[ACP]. Its pathway is lipid metabolism; phospholipid metabolism. Catalyzes the reversible formation of acyl-phosphate (acyl-PO(4)) from acyl-[acyl-carrier-protein] (acyl-ACP). This enzyme utilizes acyl-ACP as fatty acyl donor, but not acyl-CoA. In Brevibacillus brevis (strain 47 / JCM 6285 / NBRC 100599), this protein is Phosphate acyltransferase.